A 607-amino-acid chain; its full sequence is Branchpoint-bridging protein (607 aa).

2 stretches are compositionally biased toward polar residues: residues 1–15 (MSWRNQGITGSNNIP) and 35–45 (VTPSAPSSVTN). 2 disordered regions span residues 1-92 (MSWR…TENK) and 134-155 (VPADGDRSPSPAPQYDNHGRRV). A compositionally biased stretch (basic and acidic residues) spans 46–76 (GDRDRDRDGPVYSNDRDVKRGRSPERSEDGP). The 81-residue stretch at 201–281 (YVPVNDYPEI…EKVNKAKKLI (81 aa)) folds into the KH domain. 2 CCHC-type zinc fingers span residues 319–336 (QACQNCGQIGHRKYDCPE) and 344–361 (IICRVCGNAGHMARDCPD). 2 disordered regions span residues 363 to 390 (QRGASWRNDGPGAGRTAGRIGSSGGGDA) and 407 to 607 (AAPA…PPGA). The segment covering 373 to 389 (PGAGRTAGRIGSSGGGD) has biased composition (gly residues). Positions 472–500 (ARDRNERRHDDRDRGDSYYGGDRRHDDYG) are enriched in basic and acidic residues. Residues 521–533 (SAPAIPTAPAYPG) are compositionally biased toward low complexity. Positions 534–545 (AYGGYPGYGAPP) are enriched in gly residues. 2 stretches are compositionally biased toward pro residues: residues 550–563 (APPPGLPPPPPGAP) and 581–607 (APPPPPPAAEAPPPPPMDLPPPPPPGA).

The protein belongs to the BBP/SF1 family.

The protein resides in the nucleus. In terms of biological role, necessary for the splicing of pre-mRNA. Has a role in the recognition of the branch site (5'-UACUAAC-3'), the pyrimidine tract and the 3'-splice site at the 3'-end of introns. This is Branchpoint-bridging protein (bbp-1) from Neurospora crassa (strain ATCC 24698 / 74-OR23-1A / CBS 708.71 / DSM 1257 / FGSC 987).